A 35-amino-acid polypeptide reads, in one-letter code: Photosystem II reaction center protein T (35 aa).

The chain crosses the membrane as a helical span at residues 3–23; sequence ALVYTFLLVSTLGIIFFAIFF.

The protein belongs to the PsbT family. As to quaternary structure, PSII is composed of 1 copy each of membrane proteins PsbA, PsbB, PsbC, PsbD, PsbE, PsbF, PsbH, PsbI, PsbJ, PsbK, PsbL, PsbM, PsbT, PsbY, PsbZ, Psb30/Ycf12, at least 3 peripheral proteins of the oxygen-evolving complex and a large number of cofactors. It forms dimeric complexes.

The protein resides in the plastid. The protein localises to the chloroplast thylakoid membrane. Functionally, found at the monomer-monomer interface of the photosystem II (PS II) dimer, plays a role in assembly and dimerization of PSII. PSII is a light-driven water plastoquinone oxidoreductase, using light energy to abstract electrons from H(2)O, generating a proton gradient subsequently used for ATP formation. In Pisum sativum (Garden pea), this protein is Photosystem II reaction center protein T.